A 718-amino-acid chain; its full sequence is Catalase-peroxidase 1 (718 aa).

Positions 93-221 form a cross-link, tryptophyl-tyrosyl-methioninium (Trp-Tyr) (with M-247); sequence WHSAGTYRIA…LAAVMMGLIY (129 aa). H94 serves as the catalytic Proton acceptor. The tryptophyl-tyrosyl-methioninium (Tyr-Met) (with W-93) cross-link spans 221–247; sequence YVNPEGVDGNPDPLKTAQDMRVTFARM. A heme b-binding site is contributed by H262.

Belongs to the peroxidase family. Peroxidase/catalase subfamily. As to quaternary structure, homodimer or homotetramer. The cofactor is heme b. Post-translationally, formation of the three residue Trp-Tyr-Met cross-link is important for the catalase, but not the peroxidase activity of the enzyme.

It carries out the reaction H2O2 + AH2 = A + 2 H2O. It catalyses the reaction 2 H2O2 = O2 + 2 H2O. Its function is as follows. Bifunctional enzyme with both catalase and broad-spectrum peroxidase activity. In Shewanella amazonensis (strain ATCC BAA-1098 / SB2B), this protein is Catalase-peroxidase 1.